A 324-amino-acid chain; its full sequence is D-alanine--D-alanine ligase (324 aa).

Residues 121-321 (NQYLKAFGVR…IKDVMTDIIE (201 aa)) form the ATP-grasp domain. 149–204 (VEKIGLPCFIKPNLGGSSFGVTKVKTREQIQPAIAKAFSEAEEVMIEAFMGGTELT) contributes to the ATP binding site. Mg(2+) contacts are provided by aspartate 275, glutamate 288, and asparagine 290.

Belongs to the D-alanine--D-alanine ligase family. It depends on Mg(2+) as a cofactor. Requires Mn(2+) as cofactor.

Its subcellular location is the cytoplasm. It carries out the reaction 2 D-alanine + ATP = D-alanyl-D-alanine + ADP + phosphate + H(+). It participates in cell wall biogenesis; peptidoglycan biosynthesis. Functionally, cell wall formation. The protein is D-alanine--D-alanine ligase of Bacteroides fragilis (strain YCH46).